A 316-amino-acid polypeptide reads, in one-letter code: Dehydrogenase/reductase SDR family protein 7-like (316 aa).

The Cytoplasmic segment spans residues 1 to 18; sequence MFFYKIIYFIGFPYIVLR. A helical; Signal-anchor for type II membrane protein membrane pass occupies residues 19–39; the sequence is LIVSIILPIASLYFIYCNFIA. Over 40–316 the chain is Peroxisomal; it reads PKLREKPESS…HKFASSSVKK (277 aa). 56-80 serves as a coordination point for NAD(+); it reads IITGASSGIGAELAKKYARLGCKVT. Position 194 (S194) interacts with substrate. Catalysis depends on Y207, which acts as the Proton acceptor.

It belongs to the short-chain dehydrogenases/reductases (SDR) family.

The protein resides in the peroxisome membrane. Functionally, putative oxidoreductase. This chain is Dehydrogenase/reductase SDR family protein 7-like, found in Dictyostelium discoideum (Social amoeba).